A 177-amino-acid polypeptide reads, in one-letter code: Protein VERNALIZATION 3 (177 aa).

Belongs to the phosphatidylethanolamine-binding protein family. In terms of tissue distribution, expressed in leaves but not in shoot apex.

Involved in the regulation of vernalization and of flowering time; this process in essential for flowering in cv. Bd29-1 but seems do not occur in cv. Bd21. The protein is Protein VERNALIZATION 3 of Brachypodium distachyon (Purple false brome).